The sequence spans 378 residues: 1-acyl-sn-glycerol-3-phosphate acyltransferase delta (378 aa).

Residues 11-31 (FLCHLVFCYVFIASGLIVNAI) traverse the membrane as a helical segment. Residues 96–101 (HKFEID) carry the HXXXXD motif motif. Transmembrane regions (helical) follow at residues 125-145 (ELAYVPIIGWMWYFVEMIFCT), 311-331 (WLFWASLLLYPFFQFLVSMVS), and 338-358 (LASLVLIFCMASMGVRWMIGV).

This sequence belongs to the 1-acyl-sn-glycerol-3-phosphate acyltransferase family.

The protein resides in the endoplasmic reticulum membrane. It carries out the reaction a 1-acyl-sn-glycero-3-phosphate + an acyl-CoA = a 1,2-diacyl-sn-glycero-3-phosphate + CoA. The enzyme catalyses (4Z,7Z,10Z,13Z,16Z,19Z)-docosahexaenoyl-CoA + 1-hexadecanoyl-sn-glycero-3-phosphate = 1-hexadecanoyl-2-(4Z,7Z,10Z,13Z,16Z,19Z-docosahexaenoyl)-sn-glycero-3-phosphate + CoA. The catalysed reaction is 1-octadecanoyl-sn-glycero-3-phosphate + (9Z,12Z)-octadecadienoyl-CoA = 1-octadecanoyl-2-(9Z,12Z-octadecadienoyl)-sn-glycero-3-phosphate + CoA. It catalyses the reaction 1-octadecanoyl-sn-glycero-3-phosphate + (4Z,7Z,10Z,13Z,16Z,19Z)-docosahexaenoyl-CoA = 1-octadecanoyl-2-(4Z,7Z,10Z,13Z,16Z,19Z-docosahexaenoyl)-sn-glycero-3-phosphate + CoA. It carries out the reaction (4Z,7Z,10Z,13Z,16Z,19Z)-docosahexaenoyl-CoA + 1-(9Z-octadecenoyl)-sn-glycero-3-phosphate = 1-(9Z-octadecenoyl)-2-(4Z,7Z,10Z,13Z,16Z,19Z-docosahexaenoyl)-sn-glycero-3-phosphate + CoA. It participates in phospholipid metabolism; CDP-diacylglycerol biosynthesis; CDP-diacylglycerol from sn-glycerol 3-phosphate: step 2/3. In terms of biological role, converts 1-acyl-sn-glycerol-3-phosphate (lysophosphatidic acid or LPA) into 1,2-diacyl-sn-glycerol-3-phosphate (phosphatidic acid or PA) by incorporating an acyl moiety at the sn-2 position of the glycerol backbone. Exhibits high acyl-CoA specificity for polyunsaturated fatty acyl-CoA, especially docosahexaenoyl-CoA (22:6-CoA, DHA-CoA). The sequence is that of 1-acyl-sn-glycerol-3-phosphate acyltransferase delta (Agpat4) from Rattus norvegicus (Rat).